Here is a 235-residue protein sequence, read N- to C-terminus: UPF0758 protein Swol_1642 (235 aa).

In terms of domain architecture, MPN spans Ile109–Ile235. Zn(2+) is bound by residues His184, His186, and Asp197. Positions His184 to Asp197 match the JAMM motif motif.

Belongs to the UPF0758 family.

In Syntrophomonas wolfei subsp. wolfei (strain DSM 2245B / Goettingen), this protein is UPF0758 protein Swol_1642.